We begin with the raw amino-acid sequence, 648 residues long: A-type voltage-gated potassium channel KCND1 (648 aa).

The Cytoplasmic portion of the chain corresponds to 1–183 (MAAGVATWLP…RAFENPHTST (183 aa)). An interaction with KCNIP1, KCNIP2, and other family members region spans residues 2-20 (AAGVATWLPFARAAAVGWL). The interaction with KCNIP2 stretch occupies residues 2–20 (AAGVATWLPFARAAAVGWL). 3 residues coordinate Zn(2+): H104, C131, and C132. The tract at residues 144 to 164 (AERLAEDEEAEQAGDGPTLPA) is disordered. The chain crosses the membrane as a helical span at residues 184–205 (AALVFYYVTGFFIAVSVIANVV). Residues 206 to 230 (ETIPCRSPTRRPPREQPCGDRFPLA) are Extracellular-facing. A helical transmembrane segment spans residues 231-252 (FFCMDTACVLIFTGEYLLRLFA). Over 253 to 263 (APSRCRFLRSV) the chain is Cytoplasmic. A helical membrane pass occupies residues 264-284 (MSLIDVVAILPYYIGLFMPKN). The Extracellular segment spans residues 285 to 287 (EDV). A helical; Voltage-sensor transmembrane segment spans residues 288–308 (SGAFVTLRVFRVFRIFKFSRH). Residues 309–323 (SQGLRILGYTLKSCA) are Cytoplasmic-facing. Residues 310–323 (QGLRILGYTLKSCA) form an S4-S5 linker region. A helical membrane pass occupies residues 324–345 (SELGFLLFSLTMAIIIFATVMF). Residues 346–359 (YAEKGTNKTNFTSI) are Extracellular-facing. 2 N-linked (GlcNAc...) asparagine glycosylation sites follow: N352 and N355. An intramembrane region (helical) is located at residues 360 to 371 (PAAFWYTIVTMT). Residues 372 to 377 (TLGYGD) carry the Selectivity filter motif. An intramembrane segment occupies 372–379 (TLGYGDMV). Residues 380 to 386 (PSTIAGK) are Extracellular-facing. A helical transmembrane segment spans residues 387 to 415 (IFGSICSLSGVLVIALPVPVIVSNFSRIY). Residues 416–648 (HQNQRADKRR…LPETVKISSL (233 aa)) lie on the Cytoplasmic side of the membrane. At S458 the chain carries Phosphoserine. The segment at 474-489 (FEQQHHHLLHCLEKTT) is mediates dendritic targeting. The tract at residues 474–489 (FEQQHHHLLHCLEKTT) is required for dendritic targeting. Phosphoserine is present on S555. The interval 601 to 636 (IPTPPANTPDESQPSSPGGGGGGASSTLRNSSLGTP) is disordered.

The protein belongs to the potassium channel family. D (Shal) (TC 1.A.1.2) subfamily. Kv4.1/KCND1 sub-subfamily. As to quaternary structure, component of heteromultimeric potassium channels. Identified in potassium channel complexes containing KCND1, KCND2, KCND3, KCNIP1, KCNIP2, KCNIP3, KCNIP4, DPP6 and DPP10.

Its subcellular location is the cell membrane. The enzyme catalyses K(+)(in) = K(+)(out). In terms of biological role, A-type voltage-gated potassium channel that mediates transmembrane potassium transport in excitable membranes in the brain. Mediates A-type current I(SA) in suprachiasmatic nucleus (SCN) neurons. Exhibits a low-threshold A-type current with a hyperpolarized steady-state inactivation midpoint and the recovery process was steeply voltage-dependent, with recovery being markedly faster at more negative potentials. May regulates repetitive firing rates in the suprachiasmatic nucleus (SCN) neurons and circadian rhythms in neuronal excitability and behavior. Contributes to the regulation of the circadian rhythm of action potential firing in suprachiasmatic nucleus neurons, which regulates the circadian rhythm of locomotor activity. The regulatory subunit KCNIP1 modulates the kinetics of channel inactivation, increases the current amplitudes and accelerates recovery from inactivation, shifts activation in a depolarizing direction. The regulatory subunit DPP10 decreases the voltage sensitivity of the inactivation channel gating. The sequence is that of A-type voltage-gated potassium channel KCND1 from Bos taurus (Bovine).